The chain runs to 126 residues: Histone H2B type 1-K (126 aa).

Residues 1 to 12 (MPEPAKSAPAPK) are compositionally biased toward low complexity. Residues 1–36 (MPEPAKSAPAPKKGSKKAVTKAQKIDGKKRKRSRKE) are disordered. P2 carries the post-translational modification N-acetylproline. E3 carries the ADP-ribosyl glutamic acid modification. Residue K6 is modified to N6-(2-hydroxyisobutyryl)lysine; alternate. K6 bears the N6-(beta-hydroxybutyryl)lysine; alternate mark. K6 is subject to N6-acetyllysine; alternate. N6-butyryllysine; alternate is present on K6. K6 is subject to N6-crotonyllysine; alternate. N6-lactoyllysine; alternate is present on K6. K6 is covalently cross-linked (Glycyl lysine isopeptide (Lys-Gly) (interchain with G-Cter in SUMO2); alternate). ADP-ribosylserine is present on S7. An N6-(beta-hydroxybutyryl)lysine; alternate modification is found at K12. N6-acetyllysine; alternate is present on residues K12 and K13. Residues K12 and K13 each carry the N6-crotonyllysine; alternate modification. K12 carries the N6-lactoyllysine; alternate modification. The residue at position 13 (K13) is an N6-(2-hydroxyisobutyryl)lysine; alternate. Phosphoserine; by STK4/MST1 is present on S15. An N6-acetyllysine; alternate mark is found at K16, K17, K21, and K24. K16, K17, K21, K24, and K35 each carry N6-crotonyllysine; alternate. N6-lactoyllysine; alternate occurs at positions 16, 17, 21, and 24. K17 carries the post-translational modification N6-glutaryllysine; alternate. Residues K21, K24, and K35 each carry the N6-(2-hydroxyisobutyryl)lysine; alternate modification. K21 carries the post-translational modification N6-(beta-hydroxybutyryl)lysine; alternate. The residue at position 21 (K21) is an N6-butyryllysine; alternate. Residue K21 forms a Glycyl lysine isopeptide (Lys-Gly) (interchain with G-Cter in SUMO2); alternate linkage. K35 is modified (N6-(beta-hydroxybutyryl)lysine; alternate). Residue K35 is modified to N6-glutaryllysine; alternate. K35 carries the post-translational modification N6-succinyllysine; alternate. K35 participates in a covalent cross-link: Glycyl lysine isopeptide (Lys-Gly) (interchain with G-Cter in ubiquitin); alternate. E36 is subject to PolyADP-ribosyl glutamic acid. At S37 the chain carries Phosphoserine; by AMPK. N6-(2-hydroxyisobutyryl)lysine; alternate occurs at positions 44, 47, and 58. K44 is subject to N6-lactoyllysine; alternate. 2 positions are modified to N6-glutaryllysine; alternate: K44 and K47. K47 is modified (N6-methyllysine; alternate). Residue K58 is modified to N6,N6-dimethyllysine; alternate. R80 bears the Dimethylated arginine mark. Position 86 is an N6-(2-hydroxyisobutyryl)lysine; alternate (K86). K86 is subject to N6-acetyllysine; alternate. Residue K86 is modified to N6-lactoyllysine; alternate. K86 bears the N6,N6,N6-trimethyllysine; alternate mark. An omega-N-methylarginine mark is found at R87 and R93. K109 carries the post-translational modification N6-(2-hydroxyisobutyryl)lysine; alternate. The residue at position 109 (K109) is an N6-lactoyllysine; alternate. Residue K109 is modified to N6-glutaryllysine; alternate. An N6-methyllysine; alternate modification is found at K109. A glycan (O-linked (GlcNAc) serine) is linked at S113. A Phosphothreonine modification is found at T116. 2 positions are modified to N6-(2-hydroxyisobutyryl)lysine; alternate: K117 and K121. Residue K117 is modified to N6-(beta-hydroxybutyryl)lysine; alternate. An N6-lactoyllysine; alternate mark is found at K117 and K121. Residues K117 and K121 each carry the N6-glutaryllysine; alternate modification. N6-succinyllysine; alternate occurs at positions 117 and 121. K117 carries the post-translational modification N6-methylated lysine; alternate. K121 is covalently cross-linked (Glycyl lysine isopeptide (Lys-Gly) (interchain with G-Cter in ubiquitin); alternate).

It belongs to the histone H2B family. The nucleosome is a histone octamer containing two molecules each of H2A, H2B, H3 and H4 assembled in one H3-H4 heterotetramer and two H2A-H2B heterodimers. The octamer wraps approximately 147 bp of DNA. In terms of processing, monoubiquitination at Lys-35 (H2BK34Ub) by the MSL1/MSL2 dimer is required for histone H3 'Lys-4' (H3K4me) and 'Lys-79' (H3K79me) methylation and transcription activation at specific gene loci, such as HOXA9 and MEIS1 loci. Similarly, monoubiquitination at Lys-121 (H2BK120Ub) by the RNF20/40 complex gives a specific tag for epigenetic transcriptional activation and is also prerequisite for histone H3 'Lys-4' and 'Lys-79' methylation. It also functions cooperatively with the FACT dimer to stimulate elongation by RNA polymerase II. H2BK120Ub also acts as a regulator of mRNA splicing: deubiquitination by USP49 is required for efficient cotranscriptional splicing of a large set of exons. Post-translationally, phosphorylated on Ser-15 (H2BS14ph) by STK4/MST1 during apoptosis; which facilitates apoptotic chromatin condensation. Also phosphorylated on Ser-15 in response to DNA double strand breaks (DSBs), and in correlation with somatic hypermutation and immunoglobulin class-switch recombination. Phosphorylation at Ser-37 (H2BS36ph) by AMPK in response to stress promotes transcription. GlcNAcylation at Ser-113 promotes monoubiquitination of Lys-121. It fluctuates in response to extracellular glucose, and associates with transcribed genes. In terms of processing, ADP-ribosylated by PARP1 or PARP2 on Ser-7 (H2BS6ADPr) in response to DNA damage. H2BS6ADPr promotes recruitment of CHD1L. Mono-ADP-ribosylated on Glu-3 (H2BE2ADPr) by PARP3 in response to single-strand breaks. Poly ADP-ribosylation on Glu-36 (H2BE35ADPr) by PARP1 regulates adipogenesis: it inhibits phosphorylation at Ser-37 (H2BS36ph), thereby blocking expression of pro-adipogenetic genes. Post-translationally, crotonylation (Kcr) is specifically present in male germ cells and marks testis-specific genes in post-meiotic cells, including X-linked genes that escape sex chromosome inactivation in haploid cells. Crotonylation marks active promoters and enhancers and confers resistance to transcriptional repressors. It is also associated with post-meiotically activated genes on autosomes. Lactylated in macrophages by EP300/P300 by using lactoyl-CoA directly derived from endogenous or exogenous lactate, leading to stimulates gene transcription.

It localises to the nucleus. The protein resides in the chromosome. Core component of nucleosome. Nucleosomes wrap and compact DNA into chromatin, limiting DNA accessibility to the cellular machineries which require DNA as a template. Histones thereby play a central role in transcription regulation, DNA repair, DNA replication and chromosomal stability. DNA accessibility is regulated via a complex set of post-translational modifications of histones, also called histone code, and nucleosome remodeling. This is Histone H2B type 1-K from Bos taurus (Bovine).